Here is a 414-residue protein sequence, read N- to C-terminus: Gamma-glutamyl phosphate reductase (414 aa).

The protein belongs to the gamma-glutamyl phosphate reductase family.

It localises to the cytoplasm. The enzyme catalyses L-glutamate 5-semialdehyde + phosphate + NADP(+) = L-glutamyl 5-phosphate + NADPH + H(+). The protein operates within amino-acid biosynthesis; L-proline biosynthesis; L-glutamate 5-semialdehyde from L-glutamate: step 2/2. Catalyzes the NADPH-dependent reduction of L-glutamate 5-phosphate into L-glutamate 5-semialdehyde and phosphate. The product spontaneously undergoes cyclization to form 1-pyrroline-5-carboxylate. The sequence is that of Gamma-glutamyl phosphate reductase from Xanthomonas campestris pv. campestris (strain B100).